The sequence spans 391 residues: Casein kinase II subunit alpha (391 aa).

Residues 36 to 41 are interaction with beta subunit; the sequence is QDDYQL. The Protein kinase domain maps to 39 to 324; that stretch reads YQLVRKLGRG…AREAMEHPYF (286 aa). ATP-binding positions include 45–53 and K68; that span reads LGRGKYSEV. The active-site Proton acceptor is D156. The span at 335 to 346 shows a compositional bias: polar residues; sequence GSSNMPGGSTPV. Residues 335–363 are disordered; that stretch reads GSSNMPGGSTPVSSASMMSGISSVPTPSP. The segment covering 347–357 has biased composition (low complexity); that stretch reads SSASMMSGISS.

This sequence belongs to the protein kinase superfamily. Ser/Thr protein kinase family. CK2 subfamily. Tetramer composed of an alpha chain, an alpha' and two beta chains. Interacts with RNPS1.

It localises to the nucleus. The catalysed reaction is L-seryl-[protein] + ATP = O-phospho-L-seryl-[protein] + ADP + H(+). It carries out the reaction L-threonyl-[protein] + ATP = O-phospho-L-threonyl-[protein] + ADP + H(+). In terms of biological role, catalytic subunit of a constitutively active serine/threonine-protein kinase complex that phosphorylates a large number of substrates containing acidic residues C-terminal to the phosphorylated serine or threonine. Regulates numerous cellular processes, such as cell cycle progression, apoptosis and transcription, as well as viral infection. May act as a regulatory node which integrates and coordinates numerous signals leading to an appropriate cellular response. During mitosis, functions as a component of the p53/TP53-dependent spindle assembly checkpoint (SAC) that maintains cyclin-B-CDK1 activity and G2 arrest in response to spindle damage. Can also negatively regulate apoptosis. Phosphorylates the caspases CASP9 and CASP2 and the apoptotic regulator NOL3. Phosphorylation protects CASP9 from cleavage and activation by CASP8, and inhibits the dimerization of CASP2 and activation of CASP8. Plays an important role in the circadian clock function by phosphorylating BMAL1. The polypeptide is Casein kinase II subunit alpha (CSNK2A1) (Gallus gallus (Chicken)).